The sequence spans 207 residues: Small ribosomal subunit protein uS4 (207 aa).

The 61-residue stretch at 96 to 156 folds into the S4 RNA-binding domain; the sequence is SRLDNTVYRM…KKSHKQSRIR (61 aa).

This sequence belongs to the universal ribosomal protein uS4 family. As to quaternary structure, part of the 30S ribosomal subunit. Contacts protein S5. The interaction surface between S4 and S5 is involved in control of translational fidelity.

One of the primary rRNA binding proteins, it binds directly to 16S rRNA where it nucleates assembly of the body of the 30S subunit. Functionally, with S5 and S12 plays an important role in translational accuracy. The protein is Small ribosomal subunit protein uS4 of Blochmanniella pennsylvanica (strain BPEN).